The following is a 611-amino-acid chain: Threonine--tRNA ligase (611 aa).

The tract at residues 1–145 (MRLLLIHSDH…TILPGEGAAA (145 aa)) is editing domain. The interval 195–487 (VHVDLMRAKE…TAAQEVPSFP (293 aa)) is catalytic. Cysteine 287, histidine 339, and histidine 460 together coordinate Zn(2+).

This sequence belongs to the class-II aminoacyl-tRNA synthetase family. In terms of assembly, homodimer. Requires Zn(2+) as cofactor.

Its subcellular location is the cytoplasm. It carries out the reaction tRNA(Thr) + L-threonine + ATP = L-threonyl-tRNA(Thr) + AMP + diphosphate + H(+). Catalyzes the attachment of threonine to tRNA(Thr) in a two-step reaction: L-threonine is first activated by ATP to form Thr-AMP and then transferred to the acceptor end of tRNA(Thr). Also edits incorrectly charged L-seryl-tRNA(Thr). The chain is Threonine--tRNA ligase from Methanoculleus marisnigri (strain ATCC 35101 / DSM 1498 / JR1).